The following is a 176-amino-acid chain: MSRIGKNPVVLPAGVEVTVGEQIVVKGPLGSLKTAAHSAVNVAVEGQNVTVSKVAGAANAAAMWGTMRANLNNMVTGVSKGFERKLQLVGVGYRAQAQGDTLNLSLGFSHPVAHKMPAGVKVECPTQTEILIKGSDKQQVGQVAAEIRAYRKPEPYKGKGVRYADEVVVIKETKKK.

It belongs to the universal ribosomal protein uL6 family. As to quaternary structure, part of the 50S ribosomal subunit.

This protein binds to the 23S rRNA, and is important in its secondary structure. It is located near the subunit interface in the base of the L7/L12 stalk, and near the tRNA binding site of the peptidyltransferase center. In Dechloromonas aromatica (strain RCB), this protein is Large ribosomal subunit protein uL6.